Reading from the N-terminus, the 1366-residue chain is Agglutinin-like protein 6 (1366 aa).

The N-terminal stretch at 1–18 (MKTVILLHLFFYCTIAMA) is a signal peptide. 4 cysteine pairs are disulfide-bonded: Cys-74–Cys-151, Cys-97–Cys-113, Cys-206–Cys-301, and Cys-228–Cys-257. Asn-294 carries N-linked (GlcNAc...) asparagine glycosylation. ALS repeat units follow at residues 368–399 (TTITTSYVGISTSLSTKTATIGGTATVVVDVP), 404–435 (TTITSIWTGSATTSSTYTNPTDSIDTVVVQVP), 441–472 (VTTTQFWSGSVPTTETVTTGPQGTDSVIIKEP), 477–508 (VTTTEFWSESFATTETVTNGPEGTDSVIVREP), 513–544 (VTTTEFWSESFATTETVTNGPEGTDSVIVREP), and 549–580 (VTTTEFWSESFATTETITTGPLGTDSIVIHDP). Positions 449–470 (GSVPTTETVTTGPQGTDSVIIK) are disordered. Residues 451–464 (VPTTETVTTGPQGT) show a composition bias toward low complexity. Disordered regions lie at residues 583–658 (ESSS…TSES), 758–780 (LSSDTSSYYPSSTISPSDDFPHT), and 804–833 (VSLTSDPASSFDSSSSLNSDSSSSPSSDQS). Asn-596 is a glycosylation site (N-linked (GlcNAc...) asparagine). 2 stretches are compositionally biased toward low complexity: residues 758-775 (LSSDTSSYYPSSTISPSD) and 805-833 (SLTSDPASSFDSSSSLNSDSSSSPSSDQS). A glycan (N-linked (GlcNAc...) asparagine) is linked at Asn-866. Disordered regions lie at residues 874 to 915 (ESES…STVT), 928 to 976 (TGMP…TSAS), 996 to 1040 (SETS…KESS), 1081 to 1130 (EDNE…VSSV), and 1158 to 1218 (ETSL…STNN). Composition is skewed to low complexity over residues 875–889 (SESSSVASPSMASES), 898–915 (SESTDTTSSIGTDSSTVT), and 940–958 (TSDVTTTSSFVASSTPTSA). Positions 959 to 969 (EQSITDNPNID) are enriched in polar residues. A compositionally biased stretch (low complexity) spans 996-1021 (SETSTLSSDDSTSSDTSISSTTNSDT). Composition is skewed to polar residues over residues 1022 to 1040 (GNINAGSSHTSTASIKESS) and 1085 to 1107 (PNTFTSTPSSHSEIFSSDNSVLS). 2 stretches are compositionally biased toward low complexity: residues 1121–1130 (VTDTTTVSSV) and 1158–1177 (ETSLRSTSSSSNHATESSGT). Polar residues-rich tracts occupy residues 1192-1202 (TSTDNRLSYST) and 1209-1218 (TYANSGSTNN). N-linked (GlcNAc...) asparagine glycosylation is present at Asn-1273. A lipid anchor (GPI-anchor amidated serine) is attached at Ser-1345. The propeptide at 1346–1366 (SATKHPSWLLKFISVALFFFL) is removed in mature form.

The protein belongs to the ALS family. Post-translationally, the GPI-anchor is attached to the protein in the endoplasmic reticulum and serves to target the protein to the cell surface. There, the glucosamine-inositol phospholipid moiety is cleaved off and the GPI-modified mannoprotein is covalently attached via its lipidless GPI glycan remnant to the 1,6-beta-glucan of the outer cell wall layer.

Its subcellular location is the cell membrane. It is found in the secreted. The protein localises to the cell wall. Its function is as follows. Cell surface adhesion protein which mediates both yeast-to-host tissue adherence and yeast aggregation. Plays an important role in the pathogenesis of C.albicans infections. This chain is Agglutinin-like protein 6 (ALS6), found in Candida albicans (strain SC5314 / ATCC MYA-2876) (Yeast).